A 345-amino-acid chain; its full sequence is Isocitrate/homoisocitrate dehydrogenase (345 aa).

69 to 71 lines the NADH pocket; that stretch reads TTT. Arg-86, Arg-96, Arg-111, Tyr-118, Lys-163, and Asn-165 together coordinate (2R,3S)-homoisocitrate. Asn-165 is a binding site for NADH. Mg(2+)-binding residues include Asp-194, Asp-218, and Asp-222. Residues 251-255 and Asn-263 each bind NADH; that span reads GSAPD.

Belongs to the isocitrate and isopropylmalate dehydrogenases family. It depends on Mn(2+) as a cofactor. Mg(2+) serves as cofactor.

It catalyses the reaction D-threo-isocitrate + NAD(+) = 2-oxoglutarate + CO2 + NADH. It carries out the reaction (2R,3S)-homoisocitrate + NAD(+) = 2-oxoadipate + CO2 + NADH. The protein operates within amino-acid biosynthesis; L-lysine biosynthesis via AAA pathway; L-alpha-aminoadipate from 2-oxoglutarate: step 4/5. Catalyzes the NAD(+)-dependent oxidative decarboxylation of homoisocitrate to 2-oxoadipate (alpha-ketoadipate), and of isocitrate to 2-oxoglutarate, at near equal efficiency. May thus play a dual role in glutamate and lysine biosynthesis in vivo. Preferentially uses NAD over NADP. The polypeptide is Isocitrate/homoisocitrate dehydrogenase (Pyrococcus horikoshii (strain ATCC 700860 / DSM 12428 / JCM 9974 / NBRC 100139 / OT-3)).